The sequence spans 638 residues: Nitrous-oxide reductase (638 aa).

The segment at residues methionine 1–alanine 52 is a signal peptide (tat-type signal). Cu cation contacts are provided by histidine 129, histidine 130, and histidine 178. Ca(2+) is bound by residues tyrosine 256, glutamate 259, methionine 267, aspartate 273, and asparagine 324. Histidine 326, histidine 382, and histidine 433 together coordinate Cu cation. Lysine 454 and glutamate 469 together coordinate Ca(2+). Histidine 494, histidine 583, cysteine 618, tryptophan 620, cysteine 622, histidine 626, and methionine 629 together coordinate Cu cation. Residues asparagine 542–alanine 638 are COX2-like.

This sequence belongs to the NosZ family. In the C-terminal section; belongs to the cytochrome c oxidase subunit 2 family. As to quaternary structure, homodimer. Ca(2+) is required as a cofactor. The cofactor is Cu cation. Predicted to be exported by the Tat system. The position of the signal peptide cleavage has not been experimentally proven. In terms of processing, the N-terminus is blocked.

It localises to the periplasm. It carries out the reaction N2 + 2 Fe(III)-[cytochrome c] + H2O = nitrous oxide + 2 Fe(II)-[cytochrome c] + 2 H(+). Its pathway is nitrogen metabolism; nitrate reduction (denitrification); dinitrogen from nitrate: step 4/4. Nitrous-oxide reductase is part of a bacterial respiratory system which is activated under anaerobic conditions in the presence of nitrate or nitrous oxide. The polypeptide is Nitrous-oxide reductase (nosZ) (Stutzerimonas stutzeri (Pseudomonas stutzeri)).